Consider the following 382-residue polypeptide: UBP1-associated proteins 1B (382 aa).

The segment at 1–99 (MAKEGEERKK…SDESEEIVDS (99 aa)) is disordered. The span at 10–22 (KEKKEKKERKERK) shows a compositional bias: basic residues. Basic and acidic residues predominate over residues 23-34 (RREAEELAVREK). Positions 163 to 248 (RNIFVRGLGW…RPFNSGKPRE (86 aa)) constitute an RRM domain.

Its subcellular location is the nucleus. Acts as a component of a complex regulating the turnover of mRNAs in the nucleus. Binds with high affinity to RNA molecules that contain U-rich sequences in 3'-UTRs. May function in complex with UBP1 and contribute to the stabilization of mRNAs in the nucleus. The polypeptide is UBP1-associated proteins 1B (UBA1B) (Arabidopsis thaliana (Mouse-ear cress)).